The primary structure comprises 487 residues: MKPSTEWWRYLAPLAVIAIIALIPVPAGLESHTWLYFAVFTGVIVGLILEPVPGAVVAMVGISIIAILSPWLLFSPEQLAQPGFKFTAKSLSWAVSGFSNSVIWLIFAAFMFGTGYEKTGLGRRIALILVKKMGHRTLFLGYAVMFSELILAPVTPSNSARGAGIIYPIIRNLPPLYQSQPNDSSSRSIGSYIMWMGIVADCVTSAIFLTAMAPNLLLIGLMKSASHATLSWGDWFLGMLPLSILLVLLVPWLAYVLYPPVLKSGDQVPRWAETELQAMGPLCSREKRMLGLMVGALVLWIFGGDYIDAAMVGYSVVALMLLLRIISWDDIVSNKAAWNVFFWLASLITLATGLNNTGFISWFGKLLAGSLSGYSPTMVMVALIVVFYLLRYFFASATAYTSALAPMMIAAALAMPEIPLPVFCLMVGAAIGLGSILTPYATGPSPIYYGSGYLPTADYWRLGAIFGLIFLVLLVITGLLWMPVVLL.

14 consecutive transmembrane segments (helical) span residues 10–30 (YLAPLAVIAIIALIPVPAGLE), 33–53 (TWLYFAVFTGVIVGLILEPVP), 54–74 (GAVVAMVGISIIAILSPWLLF), 93–113 (WAVSGFSNSVIWLIFAAFMFG), 137–157 (TLFLGYAVMFSELILAPVTPS), 189–209 (IGSYIMWMGIVADCVTSAIFL), 236–256 (FLGMLPLSILLVLLVPWLAYV), 292–312 (LMVGALVLWIFGGDYIDAAMV), 313–333 (GYSVVALMLLLRIISWDDIVS), 340–360 (VFFWLASLITLATGLNNTGFI), 370–390 (SLSGYSPTMVMVALIVVFYLL), 393–413 (FFASATAYTSALAPMMIAAAL), 418–438 (IPLPVFCLMVGAAIGLGSILT), and 465–485 (IFGLIFLVLLVITGLLWMPVV).

The protein belongs to the SLC13A/DASS transporter (TC 2.A.47) family. DIT1 subfamily.

It is found in the cell inner membrane. The catalysed reaction is (2R,3R)-tartrate(out) + succinate(in) = (2R,3R)-tartrate(in) + succinate(out). Catalyzes the uptake of tartrate in exchange for intracellular succinate. Essential for anaerobic L-tartrate fermentation. In Escherichia coli O157:H7, this protein is L-tartrate/succinate antiporter (ttdT).